The chain runs to 308 residues: Putative proline iminopeptidase (308 aa).

An AB hydrolase-1 domain is found at 30–290 (KPVLYIHGGP…LYVTNNAGHS (261 aa)). The active-site Nucleophile is Ser105. Asp261 is an active-site residue. The active-site Proton donor is His289.

The protein belongs to the peptidase S33 family.

The protein localises to the cytoplasm. The catalysed reaction is Release of N-terminal proline from a peptide.. Its function is as follows. Specifically catalyzes the removal of N-terminal proline residues from peptides. The chain is Putative proline iminopeptidase (pip) from Mycoplasma genitalium (strain ATCC 33530 / DSM 19775 / NCTC 10195 / G37) (Mycoplasmoides genitalium).